The following is an 806-amino-acid chain: Glycerol-3-phosphate acyltransferase (806 aa).

An HXXXXD motif motif is present at residues Cys305–Met310.

The protein belongs to the GPAT/DAPAT family.

It is found in the cell inner membrane. It carries out the reaction sn-glycerol 3-phosphate + an acyl-CoA = a 1-acyl-sn-glycero-3-phosphate + CoA. The protein operates within phospholipid metabolism; CDP-diacylglycerol biosynthesis; CDP-diacylglycerol from sn-glycerol 3-phosphate: step 1/3. The chain is Glycerol-3-phosphate acyltransferase from Salmonella agona (strain SL483).